A 336-amino-acid polypeptide reads, in one-letter code: uncharacterized protein (336 aa).

An ATP-grasp domain is found at 123-323 (KTLMRDSGVP…YSSLINGILD (201 aa)).

Belongs to the D-alanine--D-alanine ligase family.

Functionally, could be involved in the biosynthesis of a cell wall component. This is an uncharacterized protein from Sinorhizobium fredii (strain NBRC 101917 / NGR234).